A 678-amino-acid chain; its full sequence is Protein KHNYN (678 aa).

The residue at position 10 (serine 10) is a Phosphoserine. Disordered regions lie at residues 222–251 and 347–407; these read QGVR…ARGD and LHNG…ARGG. The segment covering 355–367 has biased composition (pro residues); the sequence is PRVPSPPPAPEPP. Serine 359 is subject to Phosphoserine. Over residues 370 to 388 the composition is skewed to basic and acidic residues; sequence CGDRGDCGDRGDVGDRGDK. Positions 437–589 constitute an RNase NYN domain; the sequence is LRHIVIDGSN…LGRNGPTLDE (153 aa). Positions 595 to 633 are disordered; that stretch reads ARTQGSSKAQHPSRGFAEHGKQQQGREEEKGSGGIRKTR. A compositionally biased stretch (basic and acidic residues) spans 610–633; sequence FAEHGKQQQGREEEKGSGGIRKTR.

It belongs to the N4BP1 family.

The sequence is that of Protein KHNYN (KHNYN) from Homo sapiens (Human).